The following is a 137-amino-acid chain: Large-conductance mechanosensitive channel (137 aa).

A run of 2 helical transmembrane segments spans residues 16 to 36 (VIDL…VDSI) and 83 to 103 (GNFI…FLMI).

The protein belongs to the MscL family. As to quaternary structure, homopentamer.

Its subcellular location is the cell inner membrane. Functionally, channel that opens in response to stretch forces in the membrane lipid bilayer. May participate in the regulation of osmotic pressure changes within the cell. The protein is Large-conductance mechanosensitive channel of Methylibium petroleiphilum (strain ATCC BAA-1232 / LMG 22953 / PM1).